We begin with the raw amino-acid sequence, 166 residues long: Ubiquitin-conjugating enzyme E2-18 kDa (166 aa).

Residues 5-165 (MALRRLMKEY…VRRLARKTLG (161 aa)) enclose the UBC core domain. C90 functions as the Glycyl thioester intermediate in the catalytic mechanism. C90 participates in a covalent cross-link: Glycyl cysteine thioester (Cys-Gly) (interchain with G-Cter in ubiquitin).

This sequence belongs to the ubiquitin-conjugating enzyme family. In terms of processing, autoubiquitinated at Cys-90; undergoes 'Lys-48'-linked polyubiquitination, which leads to proteasome-dependent protein degradation.

The catalysed reaction is S-ubiquitinyl-[E1 ubiquitin-activating enzyme]-L-cysteine + [E2 ubiquitin-conjugating enzyme]-L-cysteine = [E1 ubiquitin-activating enzyme]-L-cysteine + S-ubiquitinyl-[E2 ubiquitin-conjugating enzyme]-L-cysteine.. It functions in the pathway protein modification; protein ubiquitination. Its function is as follows. Catalyzes the covalent attachment of ubiquitin to other proteins. Functions in degradation of misfolded or regulated proteins localized in the endoplasmic reticulum (ER) lumen or membrane via the ubiquitin-proteasome system. Cognate E2 conjugating enzyme for the doa10 ubiquitin ligase complex, which is part of the ERAD-C pathway responsible for the rapid degradation of membrane proteins with misfolded cytoplasmic domains, and of the hrd1 ubiquitin ligase complex, which is part of the ERAD-L and ERAD-M pathways responsible for the rapid degradation of soluble lumenal and membrane proteins with misfolded lumenal domains (ERAD-L), or ER-membrane proteins with misfolded transmembrane domains (ERAD-M). Together with hrd1, required for the degradation of the transcription factor sre1 precursor in the absence of its binding partner scp1. Has a role in the formation of chromatin structures that influence the localization of transcriptional silencing factors. In Schizosaccharomyces pombe (strain 972 / ATCC 24843) (Fission yeast), this protein is Ubiquitin-conjugating enzyme E2-18 kDa (ubc7).